The sequence spans 84 residues: MDISRAEQRILHHLAQGGRIEITREGKAIAEIRCFTRDGWVYPGVDLELFRKLKRKRAIKSSAGKPYRITERGLHLVRSELNNR.

It belongs to the UPF0386 family.

The polypeptide is UPF0386 protein R01313 (Rhizobium meliloti (strain 1021) (Ensifer meliloti)).